The following is a 134-amino-acid chain: MARVKRGVTAHAKHKKTLKAAKGFYGRRKNTIRAAKAAVDRSKQYAYRDRKVNKRNFRALWIQRINAAVREFGLTYGRFIDGLNKAGIEVDRKVLSDMAIHEPAAFGALVEASKKALAYLKEAGTANEFESAVR.

The protein belongs to the bacterial ribosomal protein bL20 family.

Functionally, binds directly to 23S ribosomal RNA and is necessary for the in vitro assembly process of the 50S ribosomal subunit. It is not involved in the protein synthesizing functions of that subunit. This chain is Large ribosomal subunit protein bL20, found in Sinorhizobium fredii (strain NBRC 101917 / NGR234).